A 202-amino-acid polypeptide reads, in one-letter code: Hydrogenase expression/formation protein HoxM (202 aa).

Positions 15, 61, and 92 each coordinate Ni(2+).

This sequence belongs to the peptidase A31 family.

Its function is as follows. Absolutely required for hydrogenase activity. Mediates the attachment of hydrogenase to the bacterial membrane; attachment is a requirement for enzymatic activity. The polypeptide is Hydrogenase expression/formation protein HoxM (hoxM) (Cupriavidus necator (strain ATCC 17699 / DSM 428 / KCTC 22496 / NCIMB 10442 / H16 / Stanier 337) (Ralstonia eutropha)).